Reading from the N-terminus, the 1376-residue chain is DNA-directed RNA polymerase subunit beta (1376 aa).

A compositionally biased stretch (polar residues) spans 1357–1368 (NSKTGRQTNPGT). The segment at 1357–1376 (NSKTGRQTNPGTRENLPAAE) is disordered.

This sequence belongs to the RNA polymerase beta chain family. In terms of assembly, the RNAP catalytic core consists of 2 alpha, 1 beta, 1 beta' and 1 omega subunit. When a sigma factor is associated with the core the holoenzyme is formed, which can initiate transcription.

The catalysed reaction is RNA(n) + a ribonucleoside 5'-triphosphate = RNA(n+1) + diphosphate. DNA-dependent RNA polymerase catalyzes the transcription of DNA into RNA using the four ribonucleoside triphosphates as substrates. The protein is DNA-directed RNA polymerase subunit beta of Azorhizobium caulinodans (strain ATCC 43989 / DSM 5975 / JCM 20966 / LMG 6465 / NBRC 14845 / NCIMB 13405 / ORS 571).